Reading from the N-terminus, the 277-residue chain is Ribosomal RNA small subunit methyltransferase A (277 aa).

His-20, Leu-22, Gly-47, Glu-71, Asp-94, and Asn-116 together coordinate S-adenosyl-L-methionine.

This sequence belongs to the class I-like SAM-binding methyltransferase superfamily. rRNA adenine N(6)-methyltransferase family. RsmA subfamily.

It localises to the cytoplasm. It catalyses the reaction adenosine(1518)/adenosine(1519) in 16S rRNA + 4 S-adenosyl-L-methionine = N(6)-dimethyladenosine(1518)/N(6)-dimethyladenosine(1519) in 16S rRNA + 4 S-adenosyl-L-homocysteine + 4 H(+). Its function is as follows. Specifically dimethylates two adjacent adenosines (A1518 and A1519) in the loop of a conserved hairpin near the 3'-end of 16S rRNA in the 30S particle. May play a critical role in biogenesis of 30S subunits. The protein is Ribosomal RNA small subunit methyltransferase A of Burkholderia sp.